The following is a 104-amino-acid chain: Large ribosomal subunit protein uL24 (104 aa).

This sequence belongs to the universal ribosomal protein uL24 family. In terms of assembly, part of the 50S ribosomal subunit.

Functionally, one of two assembly initiator proteins, it binds directly to the 5'-end of the 23S rRNA, where it nucleates assembly of the 50S subunit. Its function is as follows. One of the proteins that surrounds the polypeptide exit tunnel on the outside of the subunit. The protein is Large ribosomal subunit protein uL24 of Corynebacterium jeikeium (strain K411).